We begin with the raw amino-acid sequence, 491 residues long: MNTQQLAKLRTIVPEMRRVRHIHFVGIGGAGMGGIAEVLANEGYQISGSDLAPNSVTQHLTALGAQIYFHHRPENVLDASVVVVSTAISADNPEIVAAREARIPVIRRAEMLAELMRYRHGIAVAGTHGKTTTTAMLSSIYAEAGLDPTFVNGGLVKAAGTHARLGSSRYLIAEADESDASFLHLQPMVAIVTNIEADHMDTYQGDFENLKQTFINFLHNLPFYGRAVMCIDDPVVRELLPRVGRHITTYGFSDDADVQIASYRQEGPQGHFTLRRQDKPLIEVTLNAPGRHNALNAAAAVAVATEEGIEDEDILRALVGFQGTGRRFDFLGNFPLAPVNGKEGSAMLVDDYGHHPTEVDATIKAARAGWPDKRIVMLFQPHRYTRTRDLYDDFANVLSQVDVLLMLDVYAAGEPPIPGADSRALCRTIRNRGKLDPILVPDSESAPEMLAQILNGEDLILVQGAGNIGKIARKLAEHKLQPQLKDEEHHG.

Residue 126–132 (GTHGKTT) coordinates ATP.

Belongs to the MurCDEF family.

The protein resides in the cytoplasm. It carries out the reaction UDP-N-acetyl-alpha-D-muramate + L-alanine + ATP = UDP-N-acetyl-alpha-D-muramoyl-L-alanine + ADP + phosphate + H(+). It functions in the pathway cell wall biogenesis; peptidoglycan biosynthesis. Cell wall formation. The polypeptide is UDP-N-acetylmuramate--L-alanine ligase (Yersinia pestis (strain Pestoides F)).